Reading from the N-terminus, the 496-residue chain is Aspartyl/glutamyl-tRNA(Asn/Gln) amidotransferase subunit B (496 aa).

It belongs to the GatB/GatE family. GatB subfamily. Heterotrimer of A, B and C subunits.

It catalyses the reaction L-glutamyl-tRNA(Gln) + L-glutamine + ATP + H2O = L-glutaminyl-tRNA(Gln) + L-glutamate + ADP + phosphate + H(+). It carries out the reaction L-aspartyl-tRNA(Asn) + L-glutamine + ATP + H2O = L-asparaginyl-tRNA(Asn) + L-glutamate + ADP + phosphate + 2 H(+). Functionally, allows the formation of correctly charged Asn-tRNA(Asn) or Gln-tRNA(Gln) through the transamidation of misacylated Asp-tRNA(Asn) or Glu-tRNA(Gln) in organisms which lack either or both of asparaginyl-tRNA or glutaminyl-tRNA synthetases. The reaction takes place in the presence of glutamine and ATP through an activated phospho-Asp-tRNA(Asn) or phospho-Glu-tRNA(Gln). The chain is Aspartyl/glutamyl-tRNA(Asn/Gln) amidotransferase subunit B from Nitrosospira multiformis (strain ATCC 25196 / NCIMB 11849 / C 71).